A 1199-amino-acid polypeptide reads, in one-letter code: RNA-binding protein 20 (1199 aa).

Disordered stretches follow at residues 1 to 55, 163 to 186, and 320 to 346; these read MVLA…PQAS, PSTAIAFSPPSQTGGPGPSVSLPS, and ERPPGFSGQNKPDITAGPSLWAPPASQ. The span at 25 to 42 shows a compositional bias: low complexity; it reads VMPGVQGPSVPQGQQGMQ. Residues 43-52 show a composition bias toward pro residues; that stretch reads PLPPPPPPQP. The segment covering 170 to 183 has biased composition (low complexity); that stretch reads SPPSQTGGPGPSVS. Residues 410–444 form a U1-type zinc finger; sequence HLPHICSICDKKVFDLKDWELHVKGKLHAQKCLLF. The RRM domain maps to 520–595; the sequence is RVVHICNLPE…EKLLIRMSTR (76 aa). Positions 626 to 636 are enriched in basic and acidic residues; the sequence is EADRYGPERPR. 3 disordered regions span residues 626-685, 720-884, and 944-1077; these read EADR…NGED, REKY…YPTN, and GETL…SQAC. Residues 630-649 are RS; the sequence is YGPERPRSRSPMSRSLSPRS. S637, S639, S642, S644, and S651 each carry phosphoserine. A compositionally biased stretch (low complexity) spans 638–649; it reads RSPMSRSLSPRS. The segment covering 667–685 has biased composition (basic and acidic residues); the sequence is YAWRDEDRETVPRRENGED. At S728 the chain carries Phosphoserine. 3 stretches are compositionally biased toward basic and acidic residues: residues 739–758, 770–831, and 859–868; these read KGREDGYHRKEPKAKLDKYP, RKEE…KESQ, and ENTRTKKGQD. The residue at position 787 (S787) is a Phosphoserine. 3 positions are modified to phosphoserine: S871, S873, and S955. The span at 962–971 shows a compositional bias: polar residues; the sequence is VPSTSASCPN. S991, S1026, S1038, S1049, S1054, S1058, S1070, S1088, and S1093 each carry phosphoserine. Residues 1042–1055 are compositionally biased toward basic and acidic residues; sequence DDCKARGSPEDGSH. The span at 1067–1077 shows a compositional bias: polar residues; it reads PTESDLQSQAC. The Matrin-type zinc finger occupies 1133–1164; the sequence is FYCKLCGLFYTSEEAAKVSHCRSTVHYRNLQK. Residues 1172-1199 are disordered; sequence EGLKETEGTDSPSPERGGIGPHLERKKL. Phosphoserine is present on residues S1182 and S1184.

Associates with components of the U1 and U2 U1 small nuclear ribonucleoprotein complexes. Phosphorylation regulates the subcellular localization. Phosphorylation of Ser-637 and Ser-639 in the RS (arginine/serine-rich) region promotes nuclear localization of the protein. In contrast, phosphorylation of the C-terminal disordered region promotes localization to cytoplasmic ribonucleoprotein granules. As to expression, predominantly expressed in striated muscle, with highest expression in the heart. In differentiating myoblasts, expression correlates with sarcomere assembly: expression peaks when alpha-actinin is localized mainly in mature Z bodies within the nascent myofiber and expression declines as the sarcomeres continue to mature. Also expressed in kidney.

The protein resides in the nucleus. It is found in the cytoplasm. The protein localises to the cytoplasmic ribonucleoprotein granule. Its function is as follows. RNA-binding protein that acts as a regulator of mRNA splicing of a subset of genes encoding key structural proteins involved in cardiac development, such as TTN (Titin), CACNA1C, CAMK2D or PDLIM5/ENH. Acts as a repressor of mRNA splicing: specifically binds the 5'UCUU-3' motif that is predominantly found within intronic sequences of pre-mRNAs, leading to the exclusion of specific exons in target transcripts. RBM20-mediated exon skipping is hormone-dependent and is essential for TTN isoform transition in both cardiac and skeletal muscles. RBM20-mediated exon skipping of TTN provides substrates for the formation of circular RNA (circRNAs) from the TTN transcripts. Together with RBM24, promotes the expression of short isoforms of PDLIM5/ENH in cardiomyocytes. This chain is RNA-binding protein 20, found in Mus musculus (Mouse).